An 858-amino-acid chain; its full sequence is Respiratory burst oxidase homolog protein D (858 aa).

Over residues 1–13 the composition is skewed to basic and acidic residues; that stretch reads MQNPEDHHSDREL. The segment at 1-27 is disordered; sequence MQNPEDHHSDRELSSPSNTTKSNDDKN. Topologically, residues 1 to 318 are cytoplasmic; that stretch reads MQNPEDHHSD…KYFLLDNWRR (318 aa). 2 EF-hand-like regions span residues 134 to 144 and 171 to 182; these read TATSDSLLPRA and RNITSGCISKEQ. 2 consecutive EF-hand domains span residues 194 to 229 and 238 to 273; these read SFDS…SASA and QAAE…APIQ. 5 residues coordinate Ca(2+): D207, D209, D211, R213, and E218. Residues 319 to 339 form a helical membrane-spanning segment; the sequence is VWVLLLWIGVMAGLFAYKYVQ. Residues 340–351 are Extracellular-facing; the sequence is YKNKAAFNVMGH. Residues 352–372 form a helical membrane-spanning segment; that stretch reads CVCVAKGAAEVLKLNMALILL. Residues 357 to 514 enclose the Ferric oxidoreductase domain; it reads KGAAEVLKLN…LFVIVYSLLI (158 aa). At 373–397 the chain is on the cytoplasmic side; the sequence is PVCRNTITWLRNKTKLGGAVPFDDN. A helical membrane pass occupies residues 398 to 418; the sequence is INFHKVVAGAIAVGVGIHVLA. Residues 419-454 are Extracellular-facing; the sequence is HMTCDFPRLLNASPEKYKPMEPYFGDQPRNYWHFVK. Residues 455-475 form a helical membrane-spanning segment; sequence GVEGVSGIIMVVLMSIAFTLA. Over 476-497 the chain is Cytoplasmic; the sequence is SQRFRRNKIRLPRPLNKLTGFN. The helical transmembrane segment at 498–518 threads the bilayer; that stretch reads AFWYSHHLFVIVYSLLIVHGI. Topologically, residues 519-675 are extracellular; sequence ELYLTKEWYK…APAQDYKEYE (157 aa). The 123-residue stretch at 548–670 folds into the FAD-binding FR-type domain; the sequence is LRAFRSSVKD…DGPYGAPAQD (123 aa). The chain crosses the membrane as a helical span at residues 676–696; it reads VLLLVGLGIGATPMISIVKDI. Over 697-858 the chain is Cytoplasmic; that stretch reads VNNMKEEKYD…TKFDFHKENF (162 aa).

Belongs to the RBOH (TC 5.B.1.3) family. As to quaternary structure, monomer and homodimer. Phosphorylated by CPK. In terms of tissue distribution, expressed in leaves.

It is found in the membrane. In terms of biological role, calcium-dependent NADPH oxidase that generates superoxide. May be responsible for the oxidative burst in response to pathogen attack in the leaves. This Solanum tuberosum (Potato) protein is Respiratory burst oxidase homolog protein D (RBOHD).